Here is a 901-residue protein sequence, read N- to C-terminus: Valine--tRNA ligase (901 aa).

The disordered stretch occupies residues 1 to 37; it reads MLPGCYTHRLNMSDTQDPPQDESTTDESADALDGEYD. Residues 19-35 show a composition bias toward acidic residues; it reads PQDESTTDESADALDGE. The 'HIGH' region motif lies at 72–82; that stretch reads PTVSGNLHMGH. Positions 572-576 match the 'KMSKS' region motif; the sequence is AMSKS. Lysine 575 contacts ATP.

This sequence belongs to the class-I aminoacyl-tRNA synthetase family. ValS type 2 subfamily.

It is found in the cytoplasm. It catalyses the reaction tRNA(Val) + L-valine + ATP = L-valyl-tRNA(Val) + AMP + diphosphate. Catalyzes the attachment of valine to tRNA(Val). As ValRS can inadvertently accommodate and process structurally similar amino acids such as threonine, to avoid such errors, it has a 'posttransfer' editing activity that hydrolyzes mischarged Thr-tRNA(Val) in a tRNA-dependent manner. The polypeptide is Valine--tRNA ligase (Haloarcula marismortui (strain ATCC 43049 / DSM 3752 / JCM 8966 / VKM B-1809) (Halobacterium marismortui)).